A 186-amino-acid chain; its full sequence is Probable nicotinate-nucleotide adenylyltransferase (186 aa).

The protein belongs to the NadD family.

It carries out the reaction nicotinate beta-D-ribonucleotide + ATP + H(+) = deamido-NAD(+) + diphosphate. Its pathway is cofactor biosynthesis; NAD(+) biosynthesis; deamido-NAD(+) from nicotinate D-ribonucleotide: step 1/1. Its function is as follows. Catalyzes the reversible adenylation of nicotinate mononucleotide (NaMN) to nicotinic acid adenine dinucleotide (NaAD). The polypeptide is Probable nicotinate-nucleotide adenylyltransferase (Thermus thermophilus (strain ATCC 27634 / DSM 579 / HB8)).